Consider the following 156-residue polypeptide: Endoribonuclease YbeY (156 aa).

Zn(2+)-binding residues include His122, His126, and His132.

Belongs to the endoribonuclease YbeY family. The cofactor is Zn(2+).

The protein resides in the cytoplasm. Its function is as follows. Single strand-specific metallo-endoribonuclease involved in late-stage 70S ribosome quality control and in maturation of the 3' terminus of the 16S rRNA. The sequence is that of Endoribonuclease YbeY from Bacillus cereus (strain B4264).